Here is a 186-residue protein sequence, read N- to C-terminus: UPF0398 protein LBUL_0921 (186 aa).

This sequence belongs to the UPF0398 family.

This Lactobacillus delbrueckii subsp. bulgaricus (strain ATCC BAA-365 / Lb-18) protein is UPF0398 protein LBUL_0921.